Here is a 178-residue protein sequence, read N- to C-terminus: Gamma-crystallin S (178 aa).

An N-acetylserine modification is found at serine 2. Residues 2-5 form an N-terminal arm region; the sequence is SKTG. Beta/gamma crystallin 'Greek key' domains are found at residues 6 to 44 and 45 to 87; these read TKITFYEDKNFQGRRYDCDCDCADFHTYLSRCNSIKVEG and GTWA…RAVH. A connecting peptide region spans residues 88–93; that stretch reads LPSGGQ. Beta/gamma crystallin 'Greek key' domains lie at 94–134 and 135–177; these read YKIQ…KVLE and GVWI…RRIV.

Belongs to the beta/gamma-crystallin family. As to quaternary structure, monomer.

Functionally, crystallins are the dominant structural components of the vertebrate eye lens. In Homo sapiens (Human), this protein is Gamma-crystallin S (CRYGS).